We begin with the raw amino-acid sequence, 611 residues long: L-tyrosine decarboxylase (611 aa).

Pyridoxal 5'-phosphate contacts are provided by residues 151 to 152, threonine 292, and 382 to 384; these read GS and DPH. Residue lysine 385 is modified to N6-(pyridoxal phosphate)lysine. Tyrosine 413 serves as the catalytic Proton donor. Pyridoxal 5'-phosphate is bound at residue serine 433.

Belongs to the group II decarboxylase family. Tyrosine decarboxylase subfamily. In terms of assembly, homodimer. Pyridoxal 5'-phosphate is required as a cofactor.

The catalysed reaction is L-tyrosine + H(+) = tyramine + CO2. The enzyme catalyses L-dopa + H(+) = dopamine + CO2. Its pathway is amino-acid metabolism. Its activity is regulated as follows. Levodopa decarboxylation is not inhibited by carbidopa, benserazide, and methyldopa, that are three human L-dopa decarboxylase inhibitors. In terms of biological role, catalyzes the decarboxylation of L-tyrosine to produce tyramine. Plays a role in acid resistance since tyramine production via tyrosine decarboxylation appears to provide a cytosolic pH maintenance mechanism that helps the bacterium cope with acid stress such as that encountered in gastrointestinal tract (GIT) environments. Therefore, may contribute to the colonization of the human GIT by E.faecium. Also involved in drug metabolism, being able to catalyze decarboxylation of levodopa (L-dopa) to dopamine. In gut microbiota this enzyme is in fact exclusively responsible for the decarboxylation of levodopa, and thus reduces in situ levels of levodopa in the treatment of Parkinson's disease. It was shown that abundance of bacterial tyrosine decarboxylase in the proximal small intestine - the primary site of levodopa absorption - contributes to interindividual variation in drug efficacy and can explain the requirement for an increased dosage regimen of levodopa treatment in Parkinson's disease patients. This Enterococcus faecium (Streptococcus faecium) protein is L-tyrosine decarboxylase.